A 600-amino-acid chain; its full sequence is 1-deoxy-D-xylulose-5-phosphate synthase (600 aa).

Thiamine diphosphate contacts are provided by residues His-63 and 104–106; that span reads GHS. Asp-135 contributes to the Mg(2+) binding site. Thiamine diphosphate contacts are provided by residues 136–137, Asn-164, Tyr-271, and Glu-352; that span reads GA. Residue Asn-164 participates in Mg(2+) binding.

Belongs to the transketolase family. DXPS subfamily. Homodimer. Requires Mg(2+) as cofactor. Thiamine diphosphate is required as a cofactor.

It carries out the reaction D-glyceraldehyde 3-phosphate + pyruvate + H(+) = 1-deoxy-D-xylulose 5-phosphate + CO2. The protein operates within metabolic intermediate biosynthesis; 1-deoxy-D-xylulose 5-phosphate biosynthesis; 1-deoxy-D-xylulose 5-phosphate from D-glyceraldehyde 3-phosphate and pyruvate: step 1/1. Catalyzes the acyloin condensation reaction between C atoms 2 and 3 of pyruvate and glyceraldehyde 3-phosphate to yield 1-deoxy-D-xylulose-5-phosphate (DXP). The sequence is that of 1-deoxy-D-xylulose-5-phosphate synthase from Campylobacter fetus subsp. fetus (strain 82-40).